A 136-amino-acid polypeptide reads, in one-letter code: MRLWGLLPFLVPFILLWSIQEPELAEGFFIRTCPRVRVKCEVEERNECTRHRQCPNKKRCCLFSCGKKCMDLRQDVCSLPQDPGPCLAYLPRWWYNQETDLCTEFIYGGCQGNPNNFPSEGICTVVCKKKQMSSWI.

The first 27 residues, 1-27 (MRLWGLLPFLVPFILLWSIQEPELAEG), serve as a signal peptide directing secretion. One can recognise a WAP domain in the interval 28–73 (FFIRTCPRVRVKCEVEERNECTRHRQCPNKKRCCLFSCGKKCMDLR). Cystine bridges form between Cys-33–Cys-61, Cys-40–Cys-65, Cys-48–Cys-60, Cys-54–Cys-69, Cys-77–Cys-127, Cys-86–Cys-110, and Cys-102–Cys-123. A BPTI/Kunitz inhibitor domain is found at 77–127 (CSLPQDPGPCLAYLPRWWYNQETDLCTEFIYGGCQGNPNNFPSEGICTVVC).

Its subcellular location is the secreted. This Mus musculus (Mouse) protein is WAP four-disulfide core domain protein 6A (Wfdc6a).